We begin with the raw amino-acid sequence, 441 residues long: Asparagine--tRNA ligase, mitochondrial (441 aa).

Belongs to the class-II aminoacyl-tRNA synthetase family.

It is found in the mitochondrion. It catalyses the reaction tRNA(Asn) + L-asparagine + ATP = L-asparaginyl-tRNA(Asn) + AMP + diphosphate + H(+). The sequence is that of Asparagine--tRNA ligase, mitochondrial (slm5) from Schizosaccharomyces pombe (strain 972 / ATCC 24843) (Fission yeast).